A 68-amino-acid chain; its full sequence is MQEMLIKLIKIYQKATFFKPASCRFYPSCSNYSIEALRKYGIVKGGWLTVKRLARCHPYNPGGYDPVP.

Belongs to the UPF0161 family.

Its subcellular location is the cell membrane. Functionally, could be involved in insertion of integral membrane proteins into the membrane. This Syntrophomonas wolfei subsp. wolfei (strain DSM 2245B / Goettingen) protein is Putative membrane protein insertion efficiency factor.